The following is a 999-amino-acid chain: Ulvan lyase, long isoform (999 aa).

Residues 1–21 (MKCLKTLLVSTTLLGAFSLNA) form the signal peptide. 126 to 127 (SH) is a substrate binding site. H127 acts as the Proton donor/acceptor in catalysis. Residues D189, D199, and K201 each coordinate Ca(2+). The substrate site is built by Y280 and R297. Ca(2+) contacts are provided by D300, D303, and Y305. Y361 is a substrate binding site.

This sequence belongs to the polysaccharide lyase 24 family.

In terms of biological role, ulvan lyase involved in ulvan degradation. Ulvan is the main polysaccharide component of the Ulvales (green seaweed) cell wall. It is composed of disaccharide building blocks comprising 3-sulfated rhamnose (Rha3S) linked to D-glucuronic acid (GlcA), L-iduronic acid (IduA), or D-xylose (Xyl). Ulvan lyase catalyzes preferentially the endolytic cleavage of the glycosidic bond between Rha3S and the uronic acid GlcA, but not IduA, producing oligosaccharides that have unsaturated 4-deoxy-L-threo-hex-4-enopyranosiduronic acid (deltaUA) at the non-reducing end. The most abundant end products in the degradation of the ulvan polysaccharide were deltaUA-Rha3S disaccharides and deltaUA-Rha3S-IduA-Rha3S and deltaUA-Rha3S-Xyl-Rha3S tetrasaccharides. In Alteromonas sp, this protein is Ulvan lyase, long isoform.